The sequence spans 351 residues: Ribonucleoside-diphosphate reductase subunit beta (351 aa).

Residues Asp-94, Glu-124, and His-127 each contribute to the Fe cation site. Tyr-131 is a catalytic residue. Glu-191, Glu-225, and His-228 together coordinate Fe cation.

Belongs to the ribonucleoside diphosphate reductase small chain family. As to quaternary structure, tetramer of two alpha and two beta subunits. Requires Fe cation as cofactor.

The catalysed reaction is a 2'-deoxyribonucleoside 5'-diphosphate + [thioredoxin]-disulfide + H2O = a ribonucleoside 5'-diphosphate + [thioredoxin]-dithiol. Its function is as follows. Provides the precursors necessary for DNA synthesis. Catalyzes the biosynthesis of deoxyribonucleotides from the corresponding ribonucleotides. The sequence is that of Ribonucleoside-diphosphate reductase subunit beta (nrdB) from Treponema pallidum (strain Nichols).